Reading from the N-terminus, the 165-residue chain is uncharacterized protein (165 aa).

A disordered region spans residues Glu28 to Thr97. Positions Gly34–Ile47 are enriched in pro residues. Polar residues-rich tracts occupy residues Lys54–Asn66 and Ala73–Glu94.

This is an uncharacterized protein from Rickettsia prowazekii (strain Madrid E).